The chain runs to 284 residues: Ribose-phosphate pyrophosphokinase 1 (284 aa).

ATP is bound at residue 34 to 36; it reads DGE. Residues H126 and D163 each contribute to the Mg(2+) site. The active site involves K186. D-ribose 5-phosphate contacts are provided by residues R188, D211, and 215–219; that span reads STGGT.

It belongs to the ribose-phosphate pyrophosphokinase family. Class III (archaeal) subfamily. Requires Mg(2+) as cofactor.

The protein resides in the cytoplasm. It carries out the reaction D-ribose 5-phosphate + ATP = 5-phospho-alpha-D-ribose 1-diphosphate + AMP + H(+). The protein operates within metabolic intermediate biosynthesis; 5-phospho-alpha-D-ribose 1-diphosphate biosynthesis; 5-phospho-alpha-D-ribose 1-diphosphate from D-ribose 5-phosphate (route I): step 1/1. Functionally, involved in the biosynthesis of the central metabolite phospho-alpha-D-ribosyl-1-pyrophosphate (PRPP) via the transfer of pyrophosphoryl group from ATP to 1-hydroxyl of ribose-5-phosphate (Rib-5-P). In Archaeoglobus fulgidus (strain ATCC 49558 / DSM 4304 / JCM 9628 / NBRC 100126 / VC-16), this protein is Ribose-phosphate pyrophosphokinase 1.